We begin with the raw amino-acid sequence, 732 residues long: Acylamino-acid-releasing enzyme (732 aa).

Residue methionine 1 is modified to N-acetylmethionine. Position 187 is a phosphoserine (serine 187). Active-site charge relay system residues include serine 587, aspartate 675, and histidine 707.

The protein belongs to the peptidase S9C family. In terms of assembly, homotetramer. As to expression, expressed in the liver (at protein level).

The protein resides in the cytoplasm. The catalysed reaction is Cleavage of an N-acetyl or N-formyl amino acid from the N-terminus of a polypeptide.. Homotetramerization is required for activity. Tetramerization results in the formation of a gated channel which is involved in substrate selection and substrate access to the catalytic sites. Functionally, this enzyme catalyzes the hydrolysis of the N-terminal peptide bond of an N-acetylated peptide to generate an N-acetylated amino acid and a peptide with a free N-terminus. It preferentially cleaves off Ac-Ala, Ac-Met and Ac-Ser. Also, involved in the degradation of oxidized and glycated proteins. This chain is Acylamino-acid-releasing enzyme (APEH), found in Sus scrofa (Pig).